We begin with the raw amino-acid sequence, 404 residues long: Cysteine desulfurase IscS (404 aa).

Pyridoxal 5'-phosphate-binding positions include 75–76, Asn-155, Gln-183, and 203–205; these read AT and SAH. Lys-206 is subject to N6-(pyridoxal phosphate)lysine. Thr-243 serves as a coordination point for pyridoxal 5'-phosphate. Cys-328 acts as the Cysteine persulfide intermediate in catalysis. Position 328 (Cys-328) interacts with [2Fe-2S] cluster.

The protein belongs to the class-V pyridoxal-phosphate-dependent aminotransferase family. NifS/IscS subfamily. In terms of assembly, homodimer. Forms a heterotetramer with IscU, interacts with other sulfur acceptors. It depends on pyridoxal 5'-phosphate as a cofactor.

The protein resides in the cytoplasm. It carries out the reaction (sulfur carrier)-H + L-cysteine = (sulfur carrier)-SH + L-alanine. It participates in cofactor biosynthesis; iron-sulfur cluster biosynthesis. Its function is as follows. Master enzyme that delivers sulfur to a number of partners involved in Fe-S cluster assembly, tRNA modification or cofactor biosynthesis. Catalyzes the removal of elemental sulfur atoms from cysteine to produce alanine. Functions as a sulfur delivery protein for Fe-S cluster synthesis onto IscU, an Fe-S scaffold assembly protein, as well as other S acceptor proteins. This Shewanella loihica (strain ATCC BAA-1088 / PV-4) protein is Cysteine desulfurase IscS.